The chain runs to 461 residues: Alpha-L-fucosidase (461 aa).

An N-terminal signal peptide occupies residues 1–18; it reads MKMIIIFFILLILNLIKS.

The protein belongs to the glycosyl hydrolase 29 family.

The enzyme catalyses an alpha-L-fucoside + H2O = L-fucose + an alcohol. Functionally, alpha-L-fucosidase is responsible for hydrolyzing the alpha-1,6-linked fucose joined to the reducing-end N-acetylglucosamine of the carbohydrate moieties of glycoproteins. The chain is Alpha-L-fucosidase (alfA) from Dictyostelium discoideum (Social amoeba).